A 134-amino-acid chain; its full sequence is Small ribosomal subunit protein uS9 (134 aa).

A disordered region spans residues 109-134 (DARRTEPHKPSKSTKGPRAKRQKSYR). Over residues 118–134 (PSKSTKGPRAKRQKSYR) the composition is skewed to basic residues.

Belongs to the universal ribosomal protein uS9 family.

This Methanococcus aeolicus (strain ATCC BAA-1280 / DSM 17508 / OCM 812 / Nankai-3) protein is Small ribosomal subunit protein uS9.